Here is a 101-residue protein sequence, read N- to C-terminus: Small ribosomal subunit protein uS10 (101 aa).

The protein belongs to the universal ribosomal protein uS10 family. In terms of assembly, part of the 30S ribosomal subunit.

In terms of biological role, involved in the binding of tRNA to the ribosomes. The sequence is that of Small ribosomal subunit protein uS10 from Mycoplasmopsis synoviae (strain 53) (Mycoplasma synoviae).